A 283-amino-acid polypeptide reads, in one-letter code: Elongation factor Ts (283 aa).

The involved in Mg(2+) ion dislocation from EF-Tu stretch occupies residues 79–82 (TDFV).

This sequence belongs to the EF-Ts family.

The protein localises to the cytoplasm. In terms of biological role, associates with the EF-Tu.GDP complex and induces the exchange of GDP to GTP. It remains bound to the aminoacyl-tRNA.EF-Tu.GTP complex up to the GTP hydrolysis stage on the ribosome. In Pseudoalteromonas translucida (strain TAC 125), this protein is Elongation factor Ts.